We begin with the raw amino-acid sequence, 333 residues long: L-lactate dehydrogenase (333 aa).

NAD(+) contacts are provided by residues Gly-29 to Lys-57 and Arg-99. Residues Arg-106, Asn-138, and Arg-169 each contribute to the substrate site. Residue Asn-138 coordinates NAD(+). The active-site Proton acceptor is the His-193. Residue Thr-249 coordinates substrate.

It belongs to the LDH/MDH superfamily. LDH family. As to quaternary structure, homotetramer.

It is found in the cytoplasm. It carries out the reaction (S)-lactate + NAD(+) = pyruvate + NADH + H(+). Its pathway is fermentation; pyruvate fermentation to lactate; (S)-lactate from pyruvate: step 1/1. This Caenorhabditis elegans protein is L-lactate dehydrogenase (ldh-1).